The sequence spans 257 residues: Triosephosphate isomerase (257 aa).

9 to 11 (NWK) is a substrate binding site. The active-site Electrophile is the histidine 97. Glutamate 169 (proton acceptor) is an active-site residue. Residues glycine 175, serine 214, and 235-236 (GG) contribute to the substrate site.

The protein belongs to the triosephosphate isomerase family. In terms of assembly, homodimer.

Its subcellular location is the cytoplasm. The enzyme catalyses D-glyceraldehyde 3-phosphate = dihydroxyacetone phosphate. Its pathway is carbohydrate biosynthesis; gluconeogenesis. It functions in the pathway carbohydrate degradation; glycolysis; D-glyceraldehyde 3-phosphate from glycerone phosphate: step 1/1. In terms of biological role, involved in the gluconeogenesis. Catalyzes stereospecifically the conversion of dihydroxyacetone phosphate (DHAP) to D-glyceraldehyde-3-phosphate (G3P). This chain is Triosephosphate isomerase, found in Vibrio cholerae serotype O1 (strain ATCC 39315 / El Tor Inaba N16961).